Reading from the N-terminus, the 105-residue chain is Heat shock protein HspQ (105 aa).

Residues 75 to 105 (SELQDEHPEQPSMDELAQTIRKQLQAPRLRN) are disordered.

Belongs to the HspQ family.

The protein resides in the cytoplasm. In terms of biological role, involved in the degradation of certain denaturated proteins, including DnaA, during heat shock stress. The polypeptide is Heat shock protein HspQ (Escherichia coli O127:H6 (strain E2348/69 / EPEC)).